The sequence spans 155 residues: 6,7-dimethyl-8-ribityllumazine synthase (155 aa).

5-amino-6-(D-ribitylamino)uracil contacts are provided by residues W24, 58–60, and 82–84; these read AFE and AVI. A (2S)-2-hydroxy-3-oxobutyl phosphate-binding site is contributed by 87-88; it reads GT. H90 (proton donor) is an active-site residue. Residue F115 coordinates 5-amino-6-(D-ribitylamino)uracil. Position 129 (R129) interacts with (2S)-2-hydroxy-3-oxobutyl phosphate.

The protein belongs to the DMRL synthase family. As to quaternary structure, forms an icosahedral capsid composed of 60 subunits, arranged as a dodecamer of pentamers.

It carries out the reaction (2S)-2-hydroxy-3-oxobutyl phosphate + 5-amino-6-(D-ribitylamino)uracil = 6,7-dimethyl-8-(1-D-ribityl)lumazine + phosphate + 2 H2O + H(+). Its pathway is cofactor biosynthesis; riboflavin biosynthesis; riboflavin from 2-hydroxy-3-oxobutyl phosphate and 5-amino-6-(D-ribitylamino)uracil: step 1/2. In terms of biological role, catalyzes the formation of 6,7-dimethyl-8-ribityllumazine by condensation of 5-amino-6-(D-ribitylamino)uracil with 3,4-dihydroxy-2-butanone 4-phosphate. This is the penultimate step in the biosynthesis of riboflavin. The sequence is that of 6,7-dimethyl-8-ribityllumazine synthase from Teredinibacter turnerae (strain ATCC 39867 / T7901).